Consider the following 415-residue polypeptide: Cyclin-A2 (415 aa).

It belongs to the cyclin family. Cyclin AB subfamily. In terms of assembly, interacts with the CDK1 and CDK2 protein kinases to form serine/threonine kinase holoenzyme complexes. As to expression, ubiquitous.

Its subcellular location is the nucleus. It is found in the cytoplasm. Cyclin which controls both the G1/S and the G2/M transition phases of the cell cycle. Functions through the formation of specific serine/threonine kinase holoenzyme complexes with the cyclin-dependent protein kinases CDK1 and CDK2. The cyclin subunit confers the substrate specificity of these complexes and differentially interacts with and activates CDK1 and CDK2 throughout the cell cycle. The polypeptide is Cyclin-A2 (ccna2) (Xenopus laevis (African clawed frog)).